The following is a 421-amino-acid chain: ATP-dependent RNA helicase RhlB (421 aa).

The short motif at 9-37 (QKFSDFALHPAVIEALEKKGFHNCTPIQA) is the Q motif element. The 180-residue stretch at 40 to 219 (LPLTLEGRDV…FEQMNNAEYV (180 aa)) folds into the Helicase ATP-binding domain. 53–60 (AQTGTGKT) is an ATP binding site. A DEAD box motif is present at residues 165 to 168 (DEAD). The 146-residue stretch at 245 to 390 (RLLQTLLEEE…VSKYNPDALM (146 aa)) folds into the Helicase C-terminal domain. The interval 396-421 (PLRLTRARPGNGPRRNGPPRNRRRSG) is disordered. A compositionally biased stretch (low complexity) spans 403–414 (RPGNGPRRNGPP).

It belongs to the DEAD box helicase family. RhlB subfamily. Component of the RNA degradosome, which is a multiprotein complex involved in RNA processing and mRNA degradation.

It is found in the cytoplasm. It catalyses the reaction ATP + H2O = ADP + phosphate + H(+). DEAD-box RNA helicase involved in RNA degradation. Has RNA-dependent ATPase activity and unwinds double-stranded RNA. This is ATP-dependent RNA helicase RhlB from Klebsiella pneumoniae subsp. pneumoniae (strain ATCC 700721 / MGH 78578).